A 1066-amino-acid polypeptide reads, in one-letter code: TBC1 domain family member 31 (1066 aa).

WD repeat units follow at residues His33–Asn74, Arg75–Lys116, Glu117–Phe157, Gln158–Leu200, Phe201–Leu248, Phe249–Cys296, and Lys297–Ser334. Residues Glu424 to His599 enclose the Rab-GAP TBC domain. Coiled coils occupy residues Gln728–Glu861 and Asn914–Glu948. Residues Cys989–Asn998 show a composition bias toward basic and acidic residues. The segment at Cys989–Ser1020 is disordered. Positions Glu999–Ser1020 are enriched in polar residues. The segment at Arg1053–His1056 is mediates direct interaction with PJA2.

Interacts with PJA2; the interaction is direct and recruits PJA2 to centrosomes. Interacts with OFD1; regulates its activity in cilium assembly. Interacts with PRKACA.

It localises to the cytoplasm. It is found in the cytoskeleton. The protein resides in the microtubule organizing center. The protein localises to the centrosome. Its subcellular location is the centriolar satellite. It localises to the cilium basal body. Its function is as follows. Molecular adapter which is involved in cilium biogenesis. Part of a functional complex including OFD1 a centriolar protein involved in cilium assembly. Could regulate the cAMP-dependent phosphorylation of OFD1, and its subsequent ubiquitination by PJA2 which ultimately leads to its proteasomal degradation. This chain is TBC1 domain family member 31, found in Homo sapiens (Human).